A 685-amino-acid polypeptide reads, in one-letter code: E3 ubiquitin-protein ligase RNF103 (685 aa).

4 consecutive transmembrane segments (helical) span residues 6-26, 326-346, 366-386, and 411-431; these read FFLLLYFLVLFVLARFFEAIV, LFVLSLVLVNLMAWMDLFITQ, LLIISWLPVLGFLQLPYLDSF, and MFYSSHPALFLSTYLGHGLLI. Acidic residues predominate over residues 526–543; the sequence is EEMSEGSQDTENDSESEN. Residues 526 to 550 are disordered; that stretch reads EEMSEGSQDTENDSESENTDTLSSE. The RING-type zinc finger occupies 621–663; sequence CVVCLENFENGCLLMGLPCGHVFHQNCIVMWLAGGRHCCPVCR.

Interacts with DERL1 and VCP. In terms of tissue distribution, highly expressed in the normal cerebellum but not in the cerebral cortex.

The protein resides in the endoplasmic reticulum membrane. The catalysed reaction is S-ubiquitinyl-[E2 ubiquitin-conjugating enzyme]-L-cysteine + [acceptor protein]-L-lysine = [E2 ubiquitin-conjugating enzyme]-L-cysteine + N(6)-ubiquitinyl-[acceptor protein]-L-lysine.. It participates in protein modification; protein ubiquitination. Functionally, acts as an E2-dependent E3 ubiquitin-protein ligase, probably involved in the ER-associated protein degradation pathway. This is E3 ubiquitin-protein ligase RNF103 (RNF103) from Homo sapiens (Human).